The chain runs to 417 residues: Serine/threonine-protein kinase PkaB (417 aa).

The Protein kinase domain occupies 9 to 270 (YTAHQILGRG…ELSARLRELL (262 aa)). ATP-binding positions include 15–23 (LGRGSAGTV) and K36. The active-site Proton acceptor is D130. 2 disordered regions span residues 279 to 371 (LDVD…RAAT) and 395 to 417 (LATG…PAAP). Positions 280 to 293 (DVDEPDAEQPEDAP) are enriched in acidic residues. Composition is skewed to low complexity over residues 294-308 (DASA…STAE) and 349-368 (GTAR…ARNR). A compositionally biased stretch (polar residues) spans 408-417 (DTRNSAPAAP).

The protein belongs to the protein kinase superfamily. Ser/Thr protein kinase family. In terms of processing, autophosphorylated mainly at Thr.

It carries out the reaction L-seryl-[protein] + ATP = O-phospho-L-seryl-[protein] + ADP + H(+). It catalyses the reaction L-threonyl-[protein] + ATP = O-phospho-L-threonyl-[protein] + ADP + H(+). This chain is Serine/threonine-protein kinase PkaB (pkaB), found in Streptomyces coelicolor (strain ATCC BAA-471 / A3(2) / M145).